Consider the following 634-residue polypeptide: Chaperone protein HtpG (634 aa).

The segment at 1-339 is a; substrate-binding; that stretch reads MAQETMSFQA…SADLPLNVSR (339 aa). Residues 340-559 are b; that stretch reads EILQESRDVK…DGEMSGYLQR (220 aa). The segment at 560 to 634 is c; sequence MLKAAGQQAP…ALLLARANEA (75 aa).

The protein belongs to the heat shock protein 90 family. As to quaternary structure, homodimer.

The protein localises to the cytoplasm. Molecular chaperone. Has ATPase activity. The sequence is that of Chaperone protein HtpG from Paraburkholderia xenovorans (strain LB400).